Consider the following 93-residue polypeptide: Large ribosomal subunit protein bL27 (93 aa).

Positions M1–F9 are excised as a propeptide.

This sequence belongs to the bacterial ribosomal protein bL27 family. The N-terminus is cleaved by ribosomal processing cysteine protease Prp.

This chain is Large ribosomal subunit protein bL27, found in Ruminiclostridium cellulolyticum (strain ATCC 35319 / DSM 5812 / JCM 6584 / H10) (Clostridium cellulolyticum).